The following is a 297-amino-acid chain: D-alanine--D-alanine ligase (297 aa).

Positions 95–294 (KMLWKAFGLP…FEQLVVKILE (200 aa)) constitute an ATP-grasp domain. 125-180 (VAKLGLPLMVKPSLEGSSVGLTKVKAVEELKSAVEYALKFDNTILIEEWLAGDELT) provides a ligand contact to ATP. The Mg(2+) site is built by Asp248, Glu261, and Asn263.

The protein belongs to the D-alanine--D-alanine ligase family. Mg(2+) serves as cofactor. Requires Mn(2+) as cofactor.

It is found in the cytoplasm. It catalyses the reaction 2 D-alanine + ATP = D-alanyl-D-alanine + ADP + phosphate + H(+). It participates in cell wall biogenesis; peptidoglycan biosynthesis. Functionally, cell wall formation. The chain is D-alanine--D-alanine ligase from Haemophilus influenzae (strain PittEE).